Reading from the N-terminus, the 356-residue chain is S-adenosylmethionine:tRNA ribosyltransferase-isomerase (356 aa).

This sequence belongs to the QueA family. As to quaternary structure, monomer.

The protein resides in the cytoplasm. It catalyses the reaction 7-aminomethyl-7-carbaguanosine(34) in tRNA + S-adenosyl-L-methionine = epoxyqueuosine(34) in tRNA + adenine + L-methionine + 2 H(+). Its pathway is tRNA modification; tRNA-queuosine biosynthesis. In terms of biological role, transfers and isomerizes the ribose moiety from AdoMet to the 7-aminomethyl group of 7-deazaguanine (preQ1-tRNA) to give epoxyqueuosine (oQ-tRNA). This Escherichia coli O1:K1 / APEC protein is S-adenosylmethionine:tRNA ribosyltransferase-isomerase.